The chain runs to 186 residues: Nicotinamide-nucleotide adenylyltransferase (186 aa).

It belongs to the archaeal NMN adenylyltransferase family.

It localises to the cytoplasm. The enzyme catalyses beta-nicotinamide D-ribonucleotide + ATP + H(+) = diphosphate + NAD(+). The protein operates within cofactor biosynthesis; NAD(+) biosynthesis; NAD(+) from nicotinamide D-ribonucleotide: step 1/1. The polypeptide is Nicotinamide-nucleotide adenylyltransferase (Pyrococcus abyssi (strain GE5 / Orsay)).